Reading from the N-terminus, the 354-residue chain is MDKKIFMDYLPEELMEFGIQPKFRTKQLYQWVYRKYVDDFEEMKNIPKDLKAKLKKEFIINPLELINHEIATDGTEKFLFKMHDNHTVETVLIKMKDEEIKDGKIKEAKYTVCVSTQVGCKVGCAFCLTAKGGFVRNLSAGEIVAQVWWMKKFKNFDENKALNVVYMGMGEPLDNYDALVKAIKILANPDGMNISPRRQTVSTSGIAPKIKRLGNENLGVNLAISLHAVDDELREQLIPLNKAYNIESVIDAIREFPIDKRKKVMFEYLVIKDVNDDIESAKKLVKLLNGIPSKVNLIYFNPYPGTNFKRPDDATMKKFQDYLINKGIMCTIRKSKGMDISAACGQLREKEINK.

Glutamate 89 acts as the Proton acceptor in catalysis. The Radical SAM core domain occupies 106 to 339 (KEAKYTVCVS…CTIRKSKGMD (234 aa)). An intrachain disulfide couples cysteine 113 to cysteine 344. [4Fe-4S] cluster-binding residues include cysteine 120, cysteine 124, and cysteine 127. S-adenosyl-L-methionine is bound by residues 170–171 (GE), serine 202, 225–227 (SLH), and asparagine 301. Cysteine 344 functions as the S-methylcysteine intermediate in the catalytic mechanism.

It belongs to the radical SAM superfamily. RlmN family. It depends on [4Fe-4S] cluster as a cofactor.

The protein localises to the cytoplasm. It catalyses the reaction adenosine(2503) in 23S rRNA + 2 reduced [2Fe-2S]-[ferredoxin] + 2 S-adenosyl-L-methionine = 2-methyladenosine(2503) in 23S rRNA + 5'-deoxyadenosine + L-methionine + 2 oxidized [2Fe-2S]-[ferredoxin] + S-adenosyl-L-homocysteine. The enzyme catalyses adenosine(37) in tRNA + 2 reduced [2Fe-2S]-[ferredoxin] + 2 S-adenosyl-L-methionine = 2-methyladenosine(37) in tRNA + 5'-deoxyadenosine + L-methionine + 2 oxidized [2Fe-2S]-[ferredoxin] + S-adenosyl-L-homocysteine. Its function is as follows. Specifically methylates position 2 of adenine 2503 in 23S rRNA and position 2 of adenine 37 in tRNAs. m2A2503 modification seems to play a crucial role in the proofreading step occurring at the peptidyl transferase center and thus would serve to optimize ribosomal fidelity. The sequence is that of Dual-specificity RNA methyltransferase RlmN from Nautilia profundicola (strain ATCC BAA-1463 / DSM 18972 / AmH).